Here is a 259-residue protein sequence, read N- to C-terminus: Eukaryotic translation initiation factor 4E1 (259 aa).

Positions 1-70 (MQSDFHRMKN…TATTTAPAGD (70 aa)) are disordered. Positions 18-27 (FKTSAPSTEQ) are enriched in polar residues. Residues 41 to 51 (EAKDVKPKEDP) show a composition bias toward basic and acidic residues. Residues 54–70 (TGEPAGNTATTTAPAGD) show a composition bias toward low complexity. MRNA is bound by residues 100 to 101 (WE), 146 to 147 (WE), and 199 to 204 (RGKSNK).

Belongs to the eukaryotic initiation factor 4E family. In terms of assembly, eIF4F is a multi-subunit complex, the composition of which varies with external and internal environmental conditions. It is composed of at least eIF4A, eIF4E1 and eIF4G1. Recruited by cup in oocytes and in early embryos, preventing the interaction with eIF4G. The interaction with cup therefore prevents the translation of key transcripts such as oskar (osk) and nanos (nos) in some regions in the early embryo. Interacts with mxt. Interacts with 4E-T and Thor. Forms a RNP containing at least me31B, eIF4E1, cup, tral and pAbp; this interaction is required for the translational silencing of maternal mRNAs during the maternal-to-zygotic transition. Post-translationally, phosphorylation increases the ability of the protein to bind to mRNA caps and to form the eIF4F complex. Expressed at the posterior end of developing oocytes (at protein level). Preferential expression in the pole cells, at different developmental stages.

The protein localises to the cytoplasm. The protein resides in the cytoplasmic ribonucleoprotein granule. It localises to the nucleus. It is found in the nuclear body. Functionally, recognizes and binds the 7-methylguanosine (m7G)-containing mRNA cap during an early step in the initiation of protein synthesis and facilitates ribosome binding by inducing the unwinding of the mRNAs secondary structures. In 0-1 hour embryos, forms a complex with me31B, cup, tral and pAbp which binds to various mRNAs including maternal mRNAs, and down-regulates their expression during the maternal-to-zygotic transition. This chain is Eukaryotic translation initiation factor 4E1, found in Drosophila melanogaster (Fruit fly).